Reading from the N-terminus, the 435-residue chain is Eukaryotic translation initiation factor 3 subunit E (435 aa).

The PCI domain occupies Thr-241–Gln-409.

Belongs to the eIF-3 subunit E family. In terms of assembly, component of the eukaryotic translation initiation factor 3 (eIF-3) complex.

It localises to the cytoplasm. Component of the eukaryotic translation initiation factor 3 (eIF-3) complex, which is involved in protein synthesis of a specialized repertoire of mRNAs and, together with other initiation factors, stimulates binding of mRNA and methionyl-tRNAi to the 40S ribosome. The eIF-3 complex specifically targets and initiates translation of a subset of mRNAs involved in cell proliferation. The polypeptide is Eukaryotic translation initiation factor 3 subunit E (Phaeosphaeria nodorum (strain SN15 / ATCC MYA-4574 / FGSC 10173) (Glume blotch fungus)).